Consider the following 240-residue polypeptide: Protein MGARP (240 aa).

Residues 1–45 (MYLRRAVSKTLALPLRAPPGPAPLRKDASLRWISSNKFPGSSGSN) are Cytoplasmic-facing. A helical; Anchor for type IV membrane protein membrane pass occupies residues 46–64 (MIYYLVVGVTVSAGGYYTY). At 65 to 240 (KRVTSGKAKR…AGSEAASAQG (176 aa)) the chain is on the mitochondrial intermembrane side. The tract at residues 72–240 (AKRSDHVTDL…AGSEAASAQG (169 aa)) is disordered. Positions 73 to 87 (KRSDHVTDLKEKTKA) are enriched in basic and acidic residues. Composition is skewed to low complexity over residues 166–183 (TVETTEVSTETTSEVTST) and 228–240 (EACAGSEAASAQG).

As to quaternary structure, interacts with RHOT1/Miro-1, RHOT2/Miro-2, TRAK1/OIP106 and TRAK2/GRIF1.

It is found in the mitochondrion. The protein resides in the mitochondrion outer membrane. The protein localises to the mitochondrion inner membrane. Functionally, plays a role in the trafficking of mitochondria along microtubules. Regulates the kinesin-mediated axonal transport of mitochondria to nerve terminals along microtubules during hypoxia. Participates in the translocation of TRAK2/GRIF1 from the cytoplasm to the mitochondrion. Also plays a role in steroidogenesis through maintenance of mitochondrial abundance and morphology. Plays an inhibitory role during neocortex development by regulating mitochondrial morphology, distribution and motility in neocortical neurons. This Bos taurus (Bovine) protein is Protein MGARP (MGARP).